Reading from the N-terminus, the 420-residue chain is Glutamyl-tRNA reductase (420 aa).

Substrate is bound by residues 49-52 (TCNR), serine 109, 114-116 (EPQ), and glutamine 120. Cysteine 50 (nucleophile) is an active-site residue. 189–194 (GAGETI) contacts NADP(+).

It belongs to the glutamyl-tRNA reductase family. Homodimer.

The enzyme catalyses (S)-4-amino-5-oxopentanoate + tRNA(Glu) + NADP(+) = L-glutamyl-tRNA(Glu) + NADPH + H(+). It participates in porphyrin-containing compound metabolism; protoporphyrin-IX biosynthesis; 5-aminolevulinate from L-glutamyl-tRNA(Glu): step 1/2. Catalyzes the NADPH-dependent reduction of glutamyl-tRNA(Glu) to glutamate 1-semialdehyde (GSA). This chain is Glutamyl-tRNA reductase, found in Yersinia enterocolitica serotype O:8 / biotype 1B (strain NCTC 13174 / 8081).